A 177-amino-acid chain; its full sequence is tRNA-splicing endonuclease (177 aa).

Active-site residues include Tyr-114, His-123, and Lys-154.

Belongs to the tRNA-intron endonuclease family. Archaeal short subfamily. As to quaternary structure, homotetramer; although the tetramer contains four active sites, only two participate in the cleavage. Therefore, it should be considered as a dimer of dimers.

It catalyses the reaction pretRNA = a 3'-half-tRNA molecule with a 5'-OH end + a 5'-half-tRNA molecule with a 2',3'-cyclic phosphate end + an intron with a 2',3'-cyclic phosphate and a 5'-hydroxyl terminus.. In terms of biological role, endonuclease that removes tRNA introns. Cleaves pre-tRNA at the 5'- and 3'-splice sites to release the intron. The products are an intron and two tRNA half-molecules bearing 2',3' cyclic phosphate and 5'-OH termini. Recognizes a pseudosymmetric substrate in which 2 bulged loops of 3 bases are separated by a stem of 4 bp. The chain is tRNA-splicing endonuclease from Methanococcus vannielii (strain ATCC 35089 / DSM 1224 / JCM 13029 / OCM 148 / SB).